We begin with the raw amino-acid sequence, 1675 residues long: Clathrin heavy chain 1 (1675 aa).

Ala2 carries the N-acetylalanine modification. The tract at residues Ala2–Tyr479 is globular terminal domain. WD40-like repeat stretches follow at residues Asn24–Ser67, Ala68–Asp107, Val108–Ala149, Gly150–Glu195, Gly196–Gln257, Asn258–Glu301, and Thr302–Glu330. Position 67 is a phosphoserine (Ser67). Thr105 carries the phosphothreonine modification. Tyr184 is modified (phosphotyrosine). A Phosphothreonine modification is found at Thr394. The binding site for the uncoating ATPase, involved in lattice disassembly stretch occupies residues Glu449–Asp465. The segment at Leu480 to Arg523 is flexible linker. Positions Ile524–Tyr634 are distal segment. Residues Ile524–Met1675 form a heavy chain arm region. 7 CHCR repeats span residues Val537–Val683, Ala686–Val828, Ile833–Asp972, Leu979–Ala1124, Tyr1128–Ala1269, Leu1274–Asn1420, and Leu1423–Phe1566. Tyr634 is subject to Phosphotyrosine. Positions Ala639–Met1675 are proximal segment. N6-succinyllysine is present on Lys737. Lys856 is modified (N6-acetyllysine). Phosphotyrosine is present on Tyr899. Ser1167 bears the Phosphoserine mark. Tyr1206 is subject to Phosphotyrosine. Positions Ala1213–Lys1522 are involved in binding clathrin light chain. A Phosphoserine modification is found at Ser1229. Lys1441 is modified (N6-acetyllysine; alternate). N6-succinyllysine; alternate is present on Lys1441. Phosphotyrosine occurs at positions 1477 and 1487. The residue at position 1494 (Ser1494) is a Phosphoserine. Lys1501 carries the N6-acetyllysine modification. Residues Ala1550 to Met1675 form a trimerization region.

This sequence belongs to the clathrin heavy chain family. In terms of assembly, clathrin triskelions, composed of 3 heavy chains and 3 light chains, are the basic subunits of the clathrin coat. In the presence of light chains, hub assembly is influenced by both the pH and the concentration of calcium. Interacts with HIP1. Interacts with DENND1A, DENND1B and DENND1C. Interacts with ERBB2. Interacts with FKBP6. Interacts with OCRL. Interacts with CKAP5 and TACC3 forming the TACC3/ch-TOG/clathrin complex located at spindle inter-microtubules bridges; the complex implicates clathrin triskelions; TACC3 and CLTC are proposed to form a composite microtubule interaction surface. Plays a role in early autophagosome formation. Interacts with ATG16L1 (via N-terminus). Interacts with RFTN1; the interaction occurs in response to pathogens. Interacts with USP2 isoform 2. Interacts with TMEM106B (via N-terminus). Interacts with DNAJC6; this interaction produces a local change in heavy-chain contacts, creating a detectable global distortion of the clathrin coat and leads to the recruitment of HSPA8.

The protein resides in the cytoplasmic vesicle membrane. The protein localises to the membrane. It localises to the coated pit. It is found in the melanosome. Its subcellular location is the cytoplasm. The protein resides in the cytoskeleton. The protein localises to the spindle. In terms of biological role, clathrin is the major protein of the polyhedral coat of coated pits and vesicles. Two different adapter protein complexes link the clathrin lattice either to the plasma membrane or to the trans-Golgi network. Acts as a component of the TACC3/ch-TOG/clathrin complex proposed to contribute to stabilization of kinetochore fibers of the mitotic spindle by acting as inter-microtubule bridge. The TACC3/ch-TOG/clathrin complex is required for the maintenance of kinetochore fiber tension. Plays a role in early autophagosome formation. Interaction with DNAJC6 mediates the recruitment of HSPA8 to the clathrin lattice and creates local destabilization of the lattice promoting uncoating. The polypeptide is Clathrin heavy chain 1 (Mus musculus (Mouse)).